A 581-amino-acid polypeptide reads, in one-letter code: DNA primase (581 aa).

The segment at 40–64 (CPFHNEKTPSFTVNGEKQFYHCFGC) adopts a CHC2-type zinc-finger fold. The 83-residue stretch at 259-341 (QRLLVVEGYM…GRQVRFMFLP (83 aa)) folds into the Toprim domain. 3 residues coordinate Mg(2+): Glu-265, Asp-309, and Asp-311.

It belongs to the DnaG primase family. As to quaternary structure, monomer. Interacts with DnaB. It depends on Zn(2+) as a cofactor. Mg(2+) is required as a cofactor.

The enzyme catalyses ssDNA + n NTP = ssDNA/pppN(pN)n-1 hybrid + (n-1) diphosphate.. Functionally, RNA polymerase that catalyzes the synthesis of short RNA molecules used as primers for DNA polymerase during DNA replication. The chain is DNA primase from Salmonella typhimurium (strain LT2 / SGSC1412 / ATCC 700720).